A 97-amino-acid chain; its full sequence is Putative septation protein SpoVG (97 aa).

This sequence belongs to the SpoVG family.

In terms of biological role, essential for sporulation. Interferes with or is a negative regulator of the pathway leading to asymmetric septation. This is Putative septation protein SpoVG from Bacillus licheniformis (strain ATCC 14580 / DSM 13 / JCM 2505 / CCUG 7422 / NBRC 12200 / NCIMB 9375 / NCTC 10341 / NRRL NRS-1264 / Gibson 46).